The primary structure comprises 143 residues: Protein SLC31A2 (143 aa).

Over 1-22 the chain is Extracellular; sequence MPMHFIFSDEAVLLFDFWRVHS. Residues 23–43 form a helical membrane-spanning segment; sequence PTGMALSVLVVLLLAVLYEGI. Residues 44–93 are Cytoplasmic-facing; sequence KVGKAKLLHKTLESLPATNSQQFILGPDQDSTGSRSTSDNRTRLRWFLCY. Phosphothreonine is present on Thr-75. The residue at position 77 (Ser-77) is a Phosphoserine. Residues 94-114 traverse the membrane as a helical segment; it reads FGQSLVHVIQVVIGYFVMLAV. Over 115–119 the chain is Extracellular; the sequence is MSYNT. Residues 120–140 form a helical membrane-spanning segment; the sequence is WIFLGVVLGSAVGYYLAYPLL. Topologically, residues 141 to 143 are cytoplasmic; that stretch reads NMT.

The protein belongs to the copper transporter (Ctr) (TC 1.A.56) family. SLC31A subfamily. In terms of assembly, oligomer. Interacts with SLC31A1; this interaction stabilizes SLC31A2 and protects it from ubiquitination and the subsequent degradation. Ubiquitinated; ubiquitination and the subsequent proteasomal degradation are prevent by SLC31A1 that stabilizes it.

The protein resides in the membrane. It is found in the cytoplasmic vesicle membrane. Its subcellular location is the late endosome membrane. It localises to the lysosome membrane. The protein localises to the recycling endosome membrane. Functionally, does not function as a copper(1+) importer in vivo. However, in vitro functions as a low-affinity copper(1+) importer. Regulator of SLC31A1 which facilitates the cleavage of the SLC31A1 ecto-domain or which stabilizes the truncated form of SLC31A1 (Truncated CTR1 form), thereby drives the SLC31A1 truncated form-dependent endosomal copper export and modulates the copper and cisplatin accumulation via SLC31A1. This Mus musculus (Mouse) protein is Protein SLC31A2.